A 198-amino-acid polypeptide reads, in one-letter code: MKKKFRTKLKKLQYFKLTFLPGFCTKLLKKELVPIKKGKTSSFRIQLLEKQKLKYNYRLKENQIKKYFKYIKLLKIFNLIQIIELRLDATIFRLGFAKSINQARQLITHGFIFINSILVKKPSFILTEKDLIYINPKKFTIILICRINLFFRYYNKYNLYIYTLCVEYLKFKLQKEFYFKLYLFIPFDENLIKYYYKF.

The S4 RNA-binding domain maps to 85 to 145 (LRLDATIFRL…PKKFTIILIC (61 aa)).

This sequence belongs to the universal ribosomal protein uS4 family. Part of the 30S ribosomal subunit.

It is found in the plastid. Its subcellular location is the apicoplast. Functionally, one of the primary rRNA binding proteins, it binds directly to 16S rRNA where it nucleates assembly of the body of the 30S subunit. This Toxoplasma gondii protein is Small ribosomal subunit protein uS4c (rps4).